The sequence spans 382 residues: Alkanesulfonate monooxygenase (382 aa).

Belongs to the SsuD family.

It catalyses the reaction an alkanesulfonate + FMNH2 + O2 = an aldehyde + FMN + sulfite + H2O + 2 H(+). Catalyzes the desulfonation of aliphatic sulfonates. The sequence is that of Alkanesulfonate monooxygenase from Pseudomonas putida (strain ATCC 47054 / DSM 6125 / CFBP 8728 / NCIMB 11950 / KT2440).